A 302-amino-acid chain; its full sequence is Mitochondrial adapter protein MCP1 (302 aa).

The interval 1–35 (MIKLHEVPPEPVDPASLPHDVNAHSPEGDGNPDKR) is disordered. Residues 1-61 (MIKLHEVPPE…RFLWNCQKIS (61 aa)) lie on the Cytoplasmic side of the membrane. The PxP motif lies at 4 to 12 (LHEVPPEPV). A helical membrane pass occupies residues 62 to 82 (VLPMALYFPLHAANTLITPAV). Residues 83–100 (SPDSAPDDVLMMVREILP) lie on the Mitochondrial intermembrane side of the membrane. The chain crosses the membrane as a helical span at residues 101–121 (SITTKLLVAGITLHVSAGVLL). Residues 122–173 (RIVNNWNKPRRNRHRHLKISAEQDLSQDSIGLTGGISGYLFGLYKTFRIPPQ) are Cytoplasmic-facing. The helical transmembrane segment at 174–194 (VISGYILVPVLIYHLLIMKWV) threads the bilayer. Residues 195-219 (PNSISTEVDFASIKQLLSSKNRWWK) are Mitochondrial intermembrane-facing. The chain crosses the membrane as a helical span at residues 220 to 240 (WLGGLVPLAILLESGVYHIGS). The Cytoplasmic portion of the chain corresponds to 241-258 (GLCRYFGVRKMTSRKKWS). The helical transmembrane segment at 259 to 276 (TAINLLTLVGFVSLIRLM) threads the bilayer. The Mitochondrial intermembrane segment spans residues 277-302 (KEDSTKLGPNQFESIFKKIRLLLHVN).

In terms of assembly, interacts (via PxP motif) with VPS13 (via SHR-BD domain).

It is found in the mitochondrion outer membrane. Its function is as follows. Recruits the lipid transfer protein Vps13 to mitochondria thereby promoting vacuole-mitochondria contacts. Involved in mitochondrial lipid homeostasis. The sequence is that of Mitochondrial adapter protein MCP1 from Saccharomyces cerevisiae (strain ATCC 204508 / S288c) (Baker's yeast).